Consider the following 430-residue polypeptide: Enolase (430 aa).

Residue Gln-164 participates in (2R)-2-phosphoglycerate binding. Residue Glu-206 is the Proton donor of the active site. Asp-243, Glu-288, and Asp-315 together coordinate Mg(2+). (2R)-2-phosphoglycerate-binding residues include Lys-340, Arg-369, Ser-370, and Lys-391. The active-site Proton acceptor is Lys-340.

This sequence belongs to the enolase family. It depends on Mg(2+) as a cofactor.

The protein localises to the cytoplasm. The protein resides in the secreted. It is found in the cell surface. It catalyses the reaction (2R)-2-phosphoglycerate = phosphoenolpyruvate + H2O. Its pathway is carbohydrate degradation; glycolysis; pyruvate from D-glyceraldehyde 3-phosphate: step 4/5. In terms of biological role, catalyzes the reversible conversion of 2-phosphoglycerate (2-PG) into phosphoenolpyruvate (PEP). It is essential for the degradation of carbohydrates via glycolysis. The sequence is that of Enolase from Lysinibacillus sphaericus (strain C3-41).